Here is a 90-residue protein sequence, read N- to C-terminus: DNA-directed RNA polymerase subunit omega (90 aa).

It belongs to the RNA polymerase subunit omega family. The RNAP catalytic core consists of 2 alpha, 1 beta, 1 beta' and 1 omega subunit. When a sigma factor is associated with the core the holoenzyme is formed, which can initiate transcription.

The enzyme catalyses RNA(n) + a ribonucleoside 5'-triphosphate = RNA(n+1) + diphosphate. Its function is as follows. Promotes RNA polymerase assembly. Latches the N- and C-terminal regions of the beta' subunit thereby facilitating its interaction with the beta and alpha subunits. The chain is DNA-directed RNA polymerase subunit omega from Hamiltonella defensa subsp. Acyrthosiphon pisum (strain 5AT).